The chain runs to 1433 residues: DNA-directed RNA polymerase subunit beta' (1433 aa).

4 residues coordinate Zn(2+): cysteine 66, cysteine 68, cysteine 81, and cysteine 84. A disordered region spans residues 328-347; the sequence is RKSSAVKTDSNRPLKSLSDS. A compositionally biased stretch (polar residues) spans 329–346; the sequence is KSSAVKTDSNRPLKSLSD. The Mg(2+) site is built by aspartate 477, aspartate 479, and aspartate 481. Cysteine 825, cysteine 899, cysteine 906, and cysteine 909 together coordinate Zn(2+).

It belongs to the RNA polymerase beta' chain family. The RNAP catalytic core consists of 2 alpha, 1 beta, 1 beta' and 1 omega subunit. When a sigma factor is associated with the core the holoenzyme is formed, which can initiate transcription. Mg(2+) is required as a cofactor. Zn(2+) serves as cofactor.

The enzyme catalyses RNA(n) + a ribonucleoside 5'-triphosphate = RNA(n+1) + diphosphate. DNA-dependent RNA polymerase catalyzes the transcription of DNA into RNA using the four ribonucleoside triphosphates as substrates. The protein is DNA-directed RNA polymerase subunit beta' of Christiangramia forsetii (strain DSM 17595 / CGMCC 1.15422 / KT0803) (Gramella forsetii).